A 585-amino-acid polypeptide reads, in one-letter code: Epithelial sodium channel subunit gamma (585 aa).

Over 1 to 55 the chain is Cytoplasmic; the sequence is MAPGEKIKAKIKKNLPVTGPQAPTIKELMRWYCLNTNTHGCRRIVVSRGRLRRLL. Residues 56–76 traverse the membrane as a helical segment; the sequence is WIGFTLTAVALILWQCALLVF. The Extracellular segment spans residues 77-477; it reads SFYTVSVSIK…GGQLGLWMSC (401 aa). Disulfide bonds link C100–C219, C308–C393, C330–C389, C334–C385, C343–C370, and C345–C359. N207 carries an N-linked (GlcNAc...) asparagine glycan. N433 is a glycosylation site (N-linked (GlcNAc...) asparagine). Residues 478–498 form a helical membrane-spanning segment; the sequence is SVVCVIEIIEVFFIDFFSIIA. The Cytoplasmic segment spans residues 499-585; that stretch reads RRQWQKAKEW…LTDTQMLDEL (87 aa). The tract at residues 513-534 is disordered; that stretch reads QAPPCPEAPRSPQGQDNPALDI. A PY motif; recruits WW domain-containing proteins and is thereby required for ubiquitination and inhibition of the channel by NEDD4 and NEDD4L motif is present at residues 559-563; it reads PPPKY.

It belongs to the amiloride-sensitive sodium channel (TC 1.A.6) family. SCNN1G subfamily. Component of the heterotrimeric epithelial sodium channel (ENaC) composed of an alpha/SCNN1A, a beta/SCNN1B and a gamma/SCNN1G subunit. An additional delta/SCNN1D subunit can replace the alpha/SCNN1A subunit to form an alternative channel with specific properties. Interacts with WWP1 (via WW domains). Interacts with WWP2 (via WW domains); inhibits the channel. Interacts with the full-length immature form of PCSK9 (pro-PCSK9); inhibits ENaC by promoting its proteasomal degradation. Interacts with BPIFA1; the interaction is indirect via SCNN1B and inhibits the proteolytic maturation of SCNN1A and SCNN1G and the activation of ENaC. Post-translationally, phosphorylated on serine and threonine residues. Aldosterone and insulin increase the basal level of phosphorylation. Ubiquitinated. Can be ubiquitinated at multiple sites and undergo monoubiquitination and polyubiquitination. Ubiquitination by NEDD4 or NEDD4L inhibits the ENaC channel through endocytosis, intracellular retention and degradation of its individual subunits. In terms of processing, ENaC is activated through the proteolytic maturation of its subunits. Furin cleaves the SCNN1G subunit first, followed by cleavage by prostasin (PRSS8), which results in a stepwise increase in the open probability of the channel due to the release of an inhibitory tract. BPIFA1, which is recruited by the SCNN1B subunit, prevents the proteolytic activation of ENaC. Post-translationally, N-glycosylated. N-linked glycans are processed to complex type during ENaC complex assembly and transport to the plasma membrane.

It is found in the apical cell membrane. The catalysed reaction is Na(+)(in) = Na(+)(out). Its activity is regulated as follows. Originally identified and characterized by its inhibition by the diuretic drug amiloride. In terms of biological role, this is one of the three pore-forming subunits of the heterotrimeric epithelial sodium channel (ENaC), a critical regulator of sodium balance and fluid homeostasis. ENaC operates in epithelial tissues, where it mediates the electrodiffusion of sodium ions from extracellular fluid through the apical membrane of cells, with water following osmotically. It plays a key role in maintaining sodium homeostasis through electrogenic sodium reabsorption in the kidneys. Additionally, ENaC is essential for airway surface liquid homeostasis, which is crucial for proper mucus clearance. This is Epithelial sodium channel subunit gamma from Pan troglodytes (Chimpanzee).